A 414-amino-acid polypeptide reads, in one-letter code: Cell division protein FtsA (414 aa).

This sequence belongs to the FtsA/MreB family. Self-interacts. Interacts with FtsZ.

The protein localises to the cell inner membrane. Cell division protein that is involved in the assembly of the Z ring. May serve as a membrane anchor for the Z ring. This is Cell division protein FtsA from Neisseria meningitidis serogroup B (strain ATCC BAA-335 / MC58).